A 457-amino-acid chain; its full sequence is Methanethiol oxidase (457 aa).

Belongs to the selenium-binding protein family.

It localises to the nucleus. It is found in the cytoplasm. Its subcellular location is the cytosol. The protein localises to the membrane. The enzyme catalyses methanethiol + O2 + H2O = hydrogen sulfide + formaldehyde + H2O2 + H(+). It functions in the pathway organosulfur degradation. In terms of biological role, catalyzes the oxidation of methanethiol, an organosulfur compound known to be produced in substantial amounts by gut bacteria. Selenium-binding protein which may be involved in the sensing of reactive xenobiotics in the cytoplasm. May be involved in intra-Golgi protein transport. This Danio rerio (Zebrafish) protein is Methanethiol oxidase (selenbp1).